Consider the following 446-residue polypeptide: Maltoporin (446 aa).

The N-terminal stretch at 1–25 (MMTTLRKLPLAVAVAAGMMSVQAMA) is a signal peptide.

The protein belongs to the porin LamB (TC 1.B.3) family. Homotrimer formed of three 18-stranded antiparallel beta-barrels, containing three independent channels.

The protein localises to the cell outer membrane. The enzyme catalyses beta-maltose(in) = beta-maltose(out). Functionally, involved in the transport of maltose and maltodextrins. This Escherichia fergusonii (strain ATCC 35469 / DSM 13698 / CCUG 18766 / IAM 14443 / JCM 21226 / LMG 7866 / NBRC 102419 / NCTC 12128 / CDC 0568-73) protein is Maltoporin.